A 129-amino-acid chain; its full sequence is Putative membrane protein insertion efficiency factor (129 aa).

It belongs to the UPF0161 family.

The protein localises to the cell inner membrane. Functionally, could be involved in insertion of integral membrane proteins into the membrane. This chain is Putative membrane protein insertion efficiency factor, found in Rhodopseudomonas palustris (strain TIE-1).